The chain runs to 336 residues: Protein-glutamate methylesterase/protein-glutamine glutaminase 3 (336 aa).

The region spanning 2 to 119 (KIAIVNDMPM…PNPKEAAAPL (118 aa)) is the Response regulatory domain. D53 carries the 4-aspartylphosphate modification. Residues 147-336 (PARRDRLVAI…APRLVEVFTQ (190 aa)) enclose the CheB-type methylesterase domain. Active-site residues include S159, H186, and D279.

This sequence belongs to the CheB family. In terms of processing, phosphorylated by CheA. Phosphorylation of the N-terminal regulatory domain activates the methylesterase activity.

The protein resides in the cytoplasm. It catalyses the reaction [protein]-L-glutamate 5-O-methyl ester + H2O = L-glutamyl-[protein] + methanol + H(+). The enzyme catalyses L-glutaminyl-[protein] + H2O = L-glutamyl-[protein] + NH4(+). Its function is as follows. Involved in chemotaxis. Part of a chemotaxis signal transduction system that modulates chemotaxis in response to various stimuli. Catalyzes the demethylation of specific methylglutamate residues introduced into the chemoreceptors (methyl-accepting chemotaxis proteins or MCP) by CheR. Also mediates the irreversible deamidation of specific glutamine residues to glutamic acid. The protein is Protein-glutamate methylesterase/protein-glutamine glutaminase 3 of Pseudomonas savastanoi pv. phaseolicola (strain 1448A / Race 6) (Pseudomonas syringae pv. phaseolicola (strain 1448A / Race 6)).